Reading from the N-terminus, the 432-residue chain is Trigger factor (432 aa).

The PPIase FKBP-type domain maps to 161-246 (EDRVTIDFTG…LKKVEERGLP (86 aa)).

Belongs to the FKBP-type PPIase family. Tig subfamily.

It localises to the cytoplasm. It catalyses the reaction [protein]-peptidylproline (omega=180) = [protein]-peptidylproline (omega=0). Functionally, involved in protein export. Acts as a chaperone by maintaining the newly synthesized protein in an open conformation. Functions as a peptidyl-prolyl cis-trans isomerase. The protein is Trigger factor of Salmonella choleraesuis (strain SC-B67).